Reading from the N-terminus, the 553-residue chain is CTP synthase (553 aa).

The tract at residues 1-278 (MVRRTHGNSQ…DAYVVRELGL (278 aa)) is amidoligase domain. S25 is a binding site for CTP. S25 is a binding site for UTP. Residues 26–31 (SLGKGL) and D83 contribute to the ATP site. Mg(2+) is bound by residues D83 and E152. CTP-binding positions include 159 to 161 (DIE), 199 to 204 (KTKPTQ), and K235. UTP-binding positions include 199 to 204 (KTKPTQ) and K235. In terms of domain architecture, Glutamine amidotransferase type-1 spans 303–552 (NIAIVGKYID…VKAALDHQAA (250 aa)). G366 is an L-glutamine binding site. C393 serves as the catalytic Nucleophile; for glutamine hydrolysis. L-glutamine-binding positions include 394 to 397 (LGLQ), E417, and R478. Catalysis depends on residues H525 and E527.

This sequence belongs to the CTP synthase family. Homotetramer.

The catalysed reaction is UTP + L-glutamine + ATP + H2O = CTP + L-glutamate + ADP + phosphate + 2 H(+). It catalyses the reaction L-glutamine + H2O = L-glutamate + NH4(+). The enzyme catalyses UTP + NH4(+) + ATP = CTP + ADP + phosphate + 2 H(+). It functions in the pathway pyrimidine metabolism; CTP biosynthesis via de novo pathway; CTP from UDP: step 2/2. With respect to regulation, allosterically activated by GTP, when glutamine is the substrate; GTP has no effect on the reaction when ammonia is the substrate. The allosteric effector GTP functions by stabilizing the protein conformation that binds the tetrahedral intermediate(s) formed during glutamine hydrolysis. Inhibited by the product CTP, via allosteric rather than competitive inhibition. In terms of biological role, catalyzes the ATP-dependent amination of UTP to CTP with either L-glutamine or ammonia as the source of nitrogen. Regulates intracellular CTP levels through interactions with the four ribonucleotide triphosphates. The chain is CTP synthase from Bifidobacterium longum (strain NCC 2705).